A 91-amino-acid polypeptide reads, in one-letter code: PqqA binding protein (91 aa).

It belongs to the PqqD family. As to quaternary structure, monomer. Interacts with PqqE.

The protein operates within cofactor biosynthesis; pyrroloquinoline quinone biosynthesis. Functionally, functions as a PqqA binding protein and presents PqqA to PqqE, in the pyrroloquinoline quinone (PQQ) biosynthetic pathway. The sequence is that of PqqA binding protein from Pseudomonas fluorescens (strain SBW25).